A 128-amino-acid polypeptide reads, in one-letter code: Large ribosomal subunit protein mL51 (128 aa).

A mitochondrion-targeting transit peptide spans 1-31; it reads MAGSLSWVAGRRLWGLVPLACRSFFLGVPRL.

The protein belongs to the mitochondrion-specific ribosomal protein mL51 family. Component of the mitochondrial ribosome large subunit (39S) which comprises a 16S rRNA and about 50 distinct proteins. Interacts with OXA1L.

The protein localises to the mitochondrion. The protein is Large ribosomal subunit protein mL51 (MRPL51) of Bos taurus (Bovine).